Consider the following 131-residue polypeptide: ER membrane protein complex subunit 5 (131 aa).

Residues 1 to 3 (MAP) are Cytoplasmic-facing. Residues 4 to 22 (SLWKGLVGIGLFALAHAAL) traverse the membrane as a helical segment. At 23 to 43 (SAAQHRSYMRLTEKEDESLPI) the chain is on the lumenal side. The helical transmembrane segment at 44–63 (DIVLQTLLAFAVTCYGIVHI) threads the bilayer. The Cytoplasmic portion of the chain corresponds to 64–131 (AGEFKDMDAT…KLRKLESLRR (68 aa)). Residue Ser120 is modified to Phosphoserine.

This sequence belongs to the membrane magnesium transporter (TC 1.A.67) family. In terms of assembly, component of the ER membrane protein complex (EMC).

It localises to the endoplasmic reticulum membrane. Its subcellular location is the golgi apparatus membrane. The protein localises to the early endosome membrane. In terms of biological role, part of the endoplasmic reticulum membrane protein complex (EMC) that enables the energy-independent insertion into endoplasmic reticulum membranes of newly synthesized membrane proteins. Preferentially accommodates proteins with transmembrane domains that are weakly hydrophobic or contain destabilizing features such as charged and aromatic residues. Involved in the cotranslational insertion of multi-pass membrane proteins in which stop-transfer membrane-anchor sequences become ER membrane spanning helices. It is also required for the post-translational insertion of tail-anchored/TA proteins in endoplasmic reticulum membranes. By mediating the proper cotranslational insertion of N-terminal transmembrane domains in an N-exo topology, with translocated N-terminus in the lumen of the ER, controls the topology of multi-pass membrane proteins like the G protein-coupled receptors. By regulating the insertion of various proteins in membranes, it is indirectly involved in many cellular processes. May be involved in Mg(2+) transport. This is ER membrane protein complex subunit 5 from Pongo abelii (Sumatran orangutan).